Reading from the N-terminus, the 440-residue chain is Xylose isomerase (440 aa).

Catalysis depends on residues histidine 101 and aspartate 104. Positions 232, 268, 271, 296, 307, 309, and 339 each coordinate Mg(2+).

This sequence belongs to the xylose isomerase family. Homotetramer. Requires Mg(2+) as cofactor.

The protein localises to the cytoplasm. The enzyme catalyses alpha-D-xylose = alpha-D-xylulofuranose. This is Xylose isomerase from Escherichia coli (strain SE11).